Reading from the N-terminus, the 97-residue chain is Conotoxin Cal6.1e (97 aa).

Positions 1–22 (MKLTTVLIVAVLVLAACQFTVT) are cleaved as a signal peptide. The segment at 23–49 (DNSGDDTENPSLRSAGENQNPDSTKTI) is disordered. Residues 23 to 60 (DNSGDDTENPSLRSAGENQNPDSTKTITARATRARTNM) constitute a propeptide that is removed on maturation. Positions 31 to 45 (NPSLRSAGENQNPDS) are enriched in polar residues. Intrachain disulfides connect C71–C87, C78–C91, and C86–C96.

Belongs to the conotoxin O1 superfamily. Expressed by the venom duct.

Its subcellular location is the secreted. Its function is as follows. Probable neurotoxin with unknown target. Possibly targets ion channels. The polypeptide is Conotoxin Cal6.1e (Californiconus californicus (California cone)).